The sequence spans 545 residues: MTTRYIFVTGGVVSSLGKGIAAASLAAILEARGLNVTIMKLDPYINVDPGTMSPTQHGEVFVTEDGAETDLDLGHYERFIRTKMNRRNNFTTGRIYEEVISKERRGDYLGATIQVIPHITNAIKEKVLAGGEGHDVAIVEIGGTVGDIESLPFLESIRQLGSELGRERTLFMHLTLVPFLGAAGEIKTKPTQHSVKELRSIGIAPDVLVCRGDRAIPANEKAKISLFCNVEERAVISLKDVDSIYKIPALLRSQGLDDLVIKRFNLTCNEADLSEWENVIYQEANPNGEVTIGMVGKYIELPDAYKSVNEALKHAGLKNRVTVNIKYIDSQTVEAKGEEVLQGLDGILVPGGFGERGVEGKIFAAKFARENNLPYFGICLGMQVALIEFARHVAGLEGAHSTEFNPQTPYPVVGLITEWINEEGDVETRHESSDLGGTMRLGAQLCHLKEGTKAAVAYDSATCVERHRHRYEVNNNYIDRLEKAGLVFSGLSSDRKLIEMIELPNHPWFVASQFHPEFTSTPRDGHALFEGFIAASYAYQKRDID.

The tract at residues 1 to 266 is amidoligase domain; sequence MTTRYIFVTG…DDLVIKRFNL (266 aa). A CTP-binding site is contributed by Ser14. Residue Ser14 participates in UTP binding. Residues 15-20 and Asp72 each bind ATP; that span reads SLGKGI. Positions 72 and 140 each coordinate Mg(2+). CTP-binding positions include 147–149, 187–192, and Lys223; these read DIE and KTKPTQ. UTP contacts are provided by residues 187 to 192 and Lys223; that span reads KTKPTQ. Residue 239–241 coordinates ATP; that stretch reads KDV. In terms of domain architecture, Glutamine amidotransferase type-1 spans 291–542; the sequence is TIGMVGKYIE…IAASYAYQKR (252 aa). Gly352 provides a ligand contact to L-glutamine. The active-site Nucleophile; for glutamine hydrolysis is Cys379. L-glutamine is bound by residues 380-383, Glu403, and Arg470; that span reads LGMQ. Active-site residues include His515 and Glu517.

This sequence belongs to the CTP synthase family. Homotetramer.

The catalysed reaction is UTP + L-glutamine + ATP + H2O = CTP + L-glutamate + ADP + phosphate + 2 H(+). It carries out the reaction L-glutamine + H2O = L-glutamate + NH4(+). It catalyses the reaction UTP + NH4(+) + ATP = CTP + ADP + phosphate + 2 H(+). The protein operates within pyrimidine metabolism; CTP biosynthesis via de novo pathway; CTP from UDP: step 2/2. Allosterically activated by GTP, when glutamine is the substrate; GTP has no effect on the reaction when ammonia is the substrate. The allosteric effector GTP functions by stabilizing the protein conformation that binds the tetrahedral intermediate(s) formed during glutamine hydrolysis. Inhibited by the product CTP, via allosteric rather than competitive inhibition. Its function is as follows. Catalyzes the ATP-dependent amination of UTP to CTP with either L-glutamine or ammonia as the source of nitrogen. Regulates intracellular CTP levels through interactions with the four ribonucleotide triphosphates. The sequence is that of CTP synthase from Shewanella frigidimarina (strain NCIMB 400).